Reading from the N-terminus, the 63-residue chain is 2-hydroxymuconate tautomerase (63 aa).

Residue Pro2 is the Proton acceptor; via imino nitrogen of the active site.

Belongs to the 4-oxalocrotonate tautomerase family. As to quaternary structure, homohexamer.

The catalysed reaction is (2Z,4E)-2-hydroxyhexa-2,4-dienedioate = (3E)-2-oxohex-3-enedioate. It functions in the pathway aromatic compound metabolism; salicylate degradation. In terms of biological role, catalyzes the ketonization of 2-hydroxymuconate stereoselectively to yield 2-oxo-3-hexenedioate. This is 2-hydroxymuconate tautomerase (aphI) from Comamonas testosteroni (Pseudomonas testosteroni).